The sequence spans 257 residues: MADS-box transcription factor 1 (257 aa).

The region spanning 1–61 is the MADS-box domain; the sequence is MGRGKVELKR…GRLFEFSSSS (61 aa). One can recognise a K-box domain in the interval 85–175; sequence NEINYQEYLK…RKKLQETSAE (91 aa).

May interact with the K-box of MADS6, MADS14 and MADS15.

It is found in the nucleus. Functionally, probable transcription factor involved in the development of floral organs. Required for the formation of inner floral organs (lodicules, stamens and carpels, or whorls 2, 3 and 4) and the lemma and palea (whorl 1), which are grass floral organs analogous to sepals. May be involved in the control of flowering time. Seems to act as transcriptional activator. May act upstream of the auxin-responsive protein GH3.8. The protein is MADS-box transcription factor 1 (MADS1) of Oryza sativa subsp. indica (Rice).